A 1396-amino-acid polypeptide reads, in one-letter code: DNA-directed RNA polymerase subunit beta (1396 aa).

The protein belongs to the RNA polymerase beta chain family. As to quaternary structure, the RNAP catalytic core consists of 2 alpha, 1 beta, 1 beta' and 1 omega subunit. When a sigma factor is associated with the core the holoenzyme is formed, which can initiate transcription.

It carries out the reaction RNA(n) + a ribonucleoside 5'-triphosphate = RNA(n+1) + diphosphate. DNA-dependent RNA polymerase catalyzes the transcription of DNA into RNA using the four ribonucleoside triphosphates as substrates. The sequence is that of DNA-directed RNA polymerase subunit beta from Erythrobacter litoralis (strain HTCC2594).